The following is a 328-amino-acid chain: Interleukin-12 subunit beta (328 aa).

An N-terminal signal peptide occupies residues 1 to 22 (MCHQQLVISWFSLVFLASPLMA). The region spanning 29-106 (DVYVVELDWY…LSHSLLLLHK (78 aa)) is the Ig-like C2-type domain. The cysteines at positions 50 and 90 are disulfide-linked. N-linked (GlcNAc...) asparagine glycosylation is found at Asn125, Asn135, and Asn222. In terms of domain architecture, Fibronectin type-III spans 237–328 (PPKNLQLKPL…WSEWASVPCS (92 aa)).

Belongs to the IL-12B family. As to quaternary structure, heterodimer with IL12A; disulfide-linked. The heterodimer is known as interleukin IL-12. Heterodimer with IL23A; disulfide-linked. The heterodimer is known as interleukin IL-23. Also secreted as a monomer. Interacts with NBR1; this interaction promotes IL-12 secretion.

The protein resides in the secreted. Its function is as follows. Cytokine that can act as a growth factor for activated T and NK cells, enhance the lytic activity of NK/lymphokine-activated killer cells, and stimulate the production of IFN-gamma by resting PBMC. Functionally, associates with IL23A to form the IL-23 interleukin, a heterodimeric cytokine which functions in innate and adaptive immunity. IL-23 may constitute with IL-17 an acute response to infection in peripheral tissues. IL-23 binds to a heterodimeric receptor complex composed of IL12RB1 and IL23R, activates the Jak-Stat signaling cascade, stimulates memory rather than naive T-cells and promotes production of pro-inflammatory cytokines. IL-23 induces autoimmune inflammation and thus may be responsible for autoimmune inflammatory diseases and may be important for tumorigenesis. This Macaca mulatta (Rhesus macaque) protein is Interleukin-12 subunit beta (IL12B).